Consider the following 252-residue polypeptide: Fructose-1,6-bisphosphatase/inositol-1-monophosphatase (252 aa).

6 residues coordinate Mg(2+): Asp38, Thr40, Glu67, Asp82, Leu84, and Asp85. Residues 85 to 87 (DGT), Arg167, Ala172, and Arg191 each bind substrate. Residue Asp200 coordinates Mg(2+).

Belongs to the inositol monophosphatase superfamily. FBPase class 4 family. As to quaternary structure, homodimer. The cofactor is Mg(2+). It depends on Mn(2+) as a cofactor.

The catalysed reaction is beta-D-fructose 1,6-bisphosphate + H2O = beta-D-fructose 6-phosphate + phosphate. The enzyme catalyses a myo-inositol phosphate + H2O = myo-inositol + phosphate. With respect to regulation, both FBPase and IMPase activities are inhibited by Ca(2+). In contrast to mammalian I-1-P phosphatases, is only very weakly inhibited by Li(+) (with an IC(50) of about 290 mM). In terms of biological role, phosphatase with broad specificity; it can dephosphorylate fructose 1,6-bisphosphate, both D and L isomers of inositol-1-phosphate (I-1-P), 2'-AMP, pNPP, inositol-2-phosphate, beta-glycerol phosphate, and alpha-D-glucose-1-phosphate. Cannot hydrolyze glucose-6-phosphate and fructose-6-phosphate. May be involved in the biosynthesis of a unique osmolyte, di-myo-inositol 1,1-phosphate. This is Fructose-1,6-bisphosphatase/inositol-1-monophosphatase (suhB) from Archaeoglobus fulgidus (strain ATCC 49558 / DSM 4304 / JCM 9628 / NBRC 100126 / VC-16).